The chain runs to 530 residues: 2,3-bisphosphoglycerate-independent phosphoglycerate mutase (530 aa).

The Mn(2+) site is built by D15 and S65. S65 serves as the catalytic Phosphoserine intermediate. Substrate contacts are provided by residues H126, 155–156, R187, R193, 257–260, and K330; these read RD and RPDR. 5 residues coordinate Mn(2+): D397, H401, D438, H439, and H456.

It belongs to the BPG-independent phosphoglycerate mutase family. In terms of assembly, monomer. It depends on Mn(2+) as a cofactor.

The catalysed reaction is (2R)-2-phosphoglycerate = (2R)-3-phosphoglycerate. Its pathway is carbohydrate degradation; glycolysis; pyruvate from D-glyceraldehyde 3-phosphate: step 3/5. Functionally, catalyzes the interconversion of 2-phosphoglycerate and 3-phosphoglycerate. This chain is 2,3-bisphosphoglycerate-independent phosphoglycerate mutase, found in Synechococcus sp. (strain JA-3-3Ab) (Cyanobacteria bacterium Yellowstone A-Prime).